The following is a 217-amino-acid chain: Large ribosomal subunit protein eL14 (217 aa).

Lys-79 bears the N6-acetyllysine mark. Lys-85 is modified (N6-acetyllysine; alternate). Lys-85 carries the post-translational modification N6-succinyllysine; alternate. Lys-124 participates in a covalent cross-link: Glycyl lysine isopeptide (Lys-Gly) (interchain with G-Cter in SUMO2). Phosphoserine is present on Ser-139. A disordered region spans residues Lys-162–Ala-217. The stretch at Lys-173–Gly-177 is one 1-1; approximate repeat. The 4 X 5 AA tandem repeats of Q-K-A-[APS]-X stretch occupies residues Lys-173–Pro-192. Tandem repeats lie at residues Gln-178 to Ala-182, Gln-183 to Gly-187, Gln-188 to Pro-192, Lys-195 to Gln-197, and Lys-198 to Gln-200. Positions Lys-195–Gln-200 are 2 X 3 AA tandem repeats of K-G-Q. An N6-succinyllysine modification is found at Lys-206.

It belongs to the eukaryotic ribosomal protein eL14 family. Component of the large ribosomal subunit.

It is found in the cytoplasm. Functionally, component of the large ribosomal subunit. The ribosome is a large ribonucleoprotein complex responsible for the synthesis of proteins in the cell. This is Large ribosomal subunit protein eL14 (Rpl14) from Mus musculus (Mouse).